The primary structure comprises 471 residues: Vanillate/3-O-methylgallate O-demethylase (471 aa).

Tyrosine 31 lines the substrate pocket. Position 57 (glutamine 57) interacts with (6S)-5,6,7,8-tetrahydrofolate. Residue histidine 60 coordinates substrate. The (6S)-5,6,7,8-tetrahydrofolate site is built by glutamine 93 and valine 120. Substrate is bound at residue arginine 122. Positions 165 and 215 each coordinate (6S)-5,6,7,8-tetrahydrofolate. 247–250 (YPSN) is a binding site for substrate. Tryptophan 256 is a (6S)-5,6,7,8-tetrahydrofolate binding site.

It belongs to the GcvT family. As to quaternary structure, homodimer.

The catalysed reaction is vanillate + (6S)-5,6,7,8-tetrahydrofolate = (6S)-5-methyl-5,6,7,8-tetrahydrofolate + 3,4-dihydroxybenzoate. It catalyses the reaction 3-O-methylgallate + (6S)-5,6,7,8-tetrahydrofolate = 3,4,5-trihydroxybenzoate + (6S)-5-methyl-5,6,7,8-tetrahydrofolate. It participates in secondary metabolite metabolism; lignin degradation. Involved in the catabolism of vanillate and syringate. Catalyzes the transfer of a methyl moiety from vanillate or 3-O-methylgallate (3MGA) to tetrahydrofolate, forming protocatechuate (PCA) or gallate, respectively, and methyl-tetrahydrofolate. Has similar activities with both substrates. Cannot use syringate. Uses an ordered, sequential kinetic mechanism. The chain is Vanillate/3-O-methylgallate O-demethylase from Sphingobium sp. (strain NBRC 103272 / SYK-6).